We begin with the raw amino-acid sequence, 92 residues long: MARSVWKGPFIDGYLLNKAEKARSSGRNEVIKIWSRRSTIMPQFVGLTFGVYNGQKFVPVLVTEQMVGHKFGEFAPTRTYYGHAADKKAKRK.

It belongs to the universal ribosomal protein uS19 family.

Protein S19 forms a complex with S13 that binds strongly to the 16S ribosomal RNA. The protein is Small ribosomal subunit protein uS19 of Rhodospirillum rubrum (strain ATCC 11170 / ATH 1.1.1 / DSM 467 / LMG 4362 / NCIMB 8255 / S1).